Consider the following 692-residue polypeptide: Putative ESX-1 scaffolding and assembly protein SaeA (692 aa).

Over residues 1 to 21 (MGERGELVSDLHPSDDHDADP) the composition is skewed to basic and acidic residues. Disordered stretches follow at residues 1 to 23 (MGERGELVSDLHPSDDHDADPRL) and 87 to 134 (PAAP…TTGF). The span at 89–107 (APEPDPPPVPEPQPEPEPG) shows a compositional bias: pro residues.

Its subcellular location is the cytoplasm. In terms of biological role, may be involved in assembly of the ESX-1 / type VII specialized secretion system (T7SS), which exports several proteins including EsxA and EsxB. Involved in DNA conjugation in recipient (MKD8) but not donor (mc(2)155) strain. The chain is Putative ESX-1 scaffolding and assembly protein SaeA from Mycolicibacterium smegmatis (strain ATCC 700084 / mc(2)155) (Mycobacterium smegmatis).